We begin with the raw amino-acid sequence, 230 residues long: Large ribosomal subunit protein uL1 (230 aa).

The protein belongs to the universal ribosomal protein uL1 family. As to quaternary structure, part of the 50S ribosomal subunit.

Its function is as follows. Binds directly to 23S rRNA. The L1 stalk is quite mobile in the ribosome, and is involved in E site tRNA release. Protein L1 is also a translational repressor protein, it controls the translation of the L11 operon by binding to its mRNA. This is Large ribosomal subunit protein uL1 from Leuconostoc mesenteroides subsp. mesenteroides (strain ATCC 8293 / DSM 20343 / BCRC 11652 / CCM 1803 / JCM 6124 / NCDO 523 / NBRC 100496 / NCIMB 8023 / NCTC 12954 / NRRL B-1118 / 37Y).